Here is a 358-residue protein sequence, read N- to C-terminus: Peptide chain release factor 1 (358 aa).

Gln-235 carries the N5-methylglutamine modification.

Belongs to the prokaryotic/mitochondrial release factor family. Post-translationally, methylated by PrmC. Methylation increases the termination efficiency of RF1.

The protein localises to the cytoplasm. Its function is as follows. Peptide chain release factor 1 directs the termination of translation in response to the peptide chain termination codons UAG and UAA. The chain is Peptide chain release factor 1 from Neisseria meningitidis serogroup B (strain ATCC BAA-335 / MC58).